The chain runs to 136 residues: Glutamate-rich protein 4 (136 aa).

The tract at residues 92–136 (EEEEEEEQEEKSCVEENKGPEEKQDEERSRSSYPAQRLPDFGMTI) is disordered. A compositionally biased stretch (basic and acidic residues) spans 101–121 (EKSCVEENKGPEEKQDEERSR).

This Mus musculus (Mouse) protein is Glutamate-rich protein 4 (Erich4).